The sequence spans 191 residues: Fe/S biogenesis protein NfuA (191 aa).

[4Fe-4S] cluster contacts are provided by Cys149 and Cys152.

This sequence belongs to the NfuA family. Homodimer. [4Fe-4S] cluster serves as cofactor.

In terms of biological role, involved in iron-sulfur cluster biogenesis. Binds a 4Fe-4S cluster, can transfer this cluster to apoproteins, and thereby intervenes in the maturation of Fe/S proteins. Could also act as a scaffold/chaperone for damaged Fe/S proteins. This chain is Fe/S biogenesis protein NfuA, found in Salmonella paratyphi A (strain ATCC 9150 / SARB42).